An 88-amino-acid polypeptide reads, in one-letter code: U1-hexatoxin-Iw1d (88 aa).

Residues 1-17 form the signal peptide; it reads LKFVVLICLVIMASTSA. Q18 is subject to Pyrrolidone carboxylic acid. Cystine bridges form between C20–C31, C25–C39, C30–C65, C49–C73, and C67–C80. Positions 86–88 are excised as a propeptide; the sequence is RSE.

This sequence belongs to the MIT-like AcTx family. In terms of tissue distribution, expressed by the venom gland.

The protein resides in the secreted. This is U1-hexatoxin-Iw1d from Illawarra wisharti (Illawarra funnel-web spider).